Here is a 230-residue protein sequence, read N- to C-terminus: Heptaprenylglyceryl phosphate synthase (230 aa).

Lysine 12 is a binding site for sn-glycerol 1-phosphate. Aspartate 14 and serine 40 together coordinate Mg(2+). Sn-glycerol 1-phosphate-binding positions include 159–164 (YLEYSG), glycine 189, and 209–210 (GN).

The protein belongs to the GGGP/HepGP synthase family. Group I subfamily. In terms of assembly, homodimer. The cofactor is Mg(2+).

It carries out the reaction sn-glycerol 1-phosphate + all-trans-heptaprenyl diphosphate = 3-heptaprenyl-sn-glycero-1-phosphate + diphosphate. It functions in the pathway membrane lipid metabolism; glycerophospholipid metabolism. Its function is as follows. Prenyltransferase that catalyzes in vivo the transfer of the heptaprenyl moiety of heptaprenyl pyrophosphate (HepPP; 35 carbon atoms) to the C3 hydroxyl of sn-glycerol-1-phosphate (G1P), producing heptaprenylglyceryl phosphate (HepGP). This reaction is an ether-bond-formation step in the biosynthesis of archaea-type G1P-based membrane lipids found in Bacillales. The chain is Heptaprenylglyceryl phosphate synthase from Bacillus pumilus (strain SAFR-032).